The sequence spans 178 residues: V-type proton ATPase subunit c''2 (178 aa).

The Lumenal portion of the chain corresponds to 1–24 (MSGVAIHASSWGAALVRISPYTFS). Residues 25–45 (AIGIAISIGVSVLGAAWGIYI) traverse the membrane as a helical segment. Residues 46–64 (TGSSLIGAAIEAPRITSKN) are Cytoplasmic-facing. A helical membrane pass occupies residues 65–85 (LISVIFCEAVAIYGVIVAIIL). The Lumenal portion of the chain corresponds to 86 to 108 (QTKLESVPSSKMYDAESLRAGYA). Residues 109–129 (IFASGIIVGFANLVCGLCVGI) form a helical membrane-spanning segment. Over 130-147 (IGSSCALSDAQNSTLFVK) the chain is Cytoplasmic. Residues 148 to 168 (ILVIEIFGSALGLFGVIVGII) traverse the membrane as a helical segment. At 169–178 (MSAQATWPTK) the chain is on the lumenal side.

Belongs to the V-ATPase proteolipid subunit family. V-ATPase is a heteromultimeric enzyme composed of a peripheral catalytic V1 complex (components A to H) attached to an integral membrane V0 proton pore complex (components: a, c, c'', d and e). The proteolipid components c and c'' are present as a hexameric ring that forms the proton-conducting pore. Interacts with APD2.

It is found in the endoplasmic reticulum membrane. The protein localises to the golgi apparatus membrane. Functionally, proton-conducting pore forming subunit of the membrane integral V0 complex of vacuolar ATPase. V-ATPase is responsible for acidifying a variety of intracellular compartments in eukaryotic cells. The protein is V-type proton ATPase subunit c''2 (VHA-c''2) of Arabidopsis thaliana (Mouse-ear cress).